The sequence spans 356 residues: Non-functional pseudokinase ZRK15 (356 aa).

The Protein kinase domain maps to 62-356 (NRVSELFDEI…SSSSCGETSL (295 aa)). Residues 68-76 (FDEIPYDWY) and Lys-94 each bind ATP.

Belongs to the protein kinase superfamily. Ser/Thr protein kinase family. ZRK subfamily. As to quaternary structure, interacts with RPP13L4/ZAR1.

This is Non-functional pseudokinase ZRK15 from Arabidopsis thaliana (Mouse-ear cress).